The chain runs to 218 residues: uncharacterized protein (218 aa).

The region spanning 111–193 (NSIYLVEGDF…ITKVIEIKAA (83 aa)) is the Toprim domain.

This is an uncharacterized protein from Mycoplasma genitalium (strain ATCC 33530 / DSM 19775 / NCTC 10195 / G37) (Mycoplasmoides genitalium).